We begin with the raw amino-acid sequence, 359 residues long: Peptide chain release factor 1 (359 aa).

Position 236 is an N5-methylglutamine (Gln236).

The protein belongs to the prokaryotic/mitochondrial release factor family. Post-translationally, methylated by PrmC. Methylation increases the termination efficiency of RF1.

It localises to the cytoplasm. In terms of biological role, peptide chain release factor 1 directs the termination of translation in response to the peptide chain termination codons UAG and UAA. This chain is Peptide chain release factor 1, found in Streptococcus pneumoniae serotype 2 (strain D39 / NCTC 7466).